A 585-amino-acid polypeptide reads, in one-letter code: Trehalase (585 aa).

The signal sequence occupies residues 1-32 (MAKTTPMAKPSVGLLTLQVLVFCALTGSLASA). Residues Arg184 and 191 to 192 (WD) each bind substrate. The N-linked (GlcNAc...) asparagine glycan is linked to Asn207. Residues Asn228, 237 to 239 (RSQ), 302 to 304 (RPE), and Gly336 each bind substrate. Catalysis depends on Asp338, which acts as the Proton donor/acceptor. Asn348 is a glycosylation site (N-linked (GlcNAc...) asparagine). Residue Glu535 is the Proton donor/acceptor of the active site. Residue Glu550 coordinates substrate.

It belongs to the glycosyl hydrolase 37 family. In terms of tissue distribution, expressed by the venom gland.

Its subcellular location is the secreted. It catalyses the reaction alpha,alpha-trehalose + H2O = alpha-D-glucose + beta-D-glucose. This Pimpla hypochondriaca (Parasitoid wasp) protein is Trehalase (tre1).